A 156-amino-acid chain; its full sequence is Superoxide dismutase [Cu-Zn] 2 (156 aa).

Residues His-47, His-49, and His-64 each coordinate Cu cation. A disulfide bridge connects residues Cys-58 and Cys-147. 4 residues coordinate Zn(2+): His-64, His-72, His-81, and Asp-84. Residue His-121 coordinates Cu cation.

The protein belongs to the Cu-Zn superoxide dismutase family. In terms of assembly, homodimer. Requires Cu cation as cofactor. Zn(2+) is required as a cofactor.

The protein resides in the cytoplasm. It catalyses the reaction 2 superoxide + 2 H(+) = H2O2 + O2. In terms of biological role, destroys radicals which are normally produced within the cells and which are toxic to biological systems. The sequence is that of Superoxide dismutase [Cu-Zn] 2 (SODCC.2) from Mesembryanthemum crystallinum (Common ice plant).